The sequence spans 160 residues: Putative NrdI-like protein (160 aa).

This sequence belongs to the NrdI family.

This is Putative NrdI-like protein from Streptococcus pyogenes serotype M3 (strain ATCC BAA-595 / MGAS315).